We begin with the raw amino-acid sequence, 376 residues long: 3-dehydroquinate synthase (376 aa).

Residues 115-119 (GVIGD), 139-140 (TS), lysine 152, and lysine 161 each bind NAD(+). Positions 194, 256, and 275 each coordinate Zn(2+).

Belongs to the sugar phosphate cyclases superfamily. Dehydroquinate synthase family. Requires Co(2+) as cofactor. Zn(2+) is required as a cofactor. It depends on NAD(+) as a cofactor.

The protein resides in the cytoplasm. The catalysed reaction is 7-phospho-2-dehydro-3-deoxy-D-arabino-heptonate = 3-dehydroquinate + phosphate. It functions in the pathway metabolic intermediate biosynthesis; chorismate biosynthesis; chorismate from D-erythrose 4-phosphate and phosphoenolpyruvate: step 2/7. Catalyzes the conversion of 3-deoxy-D-arabino-heptulosonate 7-phosphate (DAHP) to dehydroquinate (DHQ). The protein is 3-dehydroquinate synthase of Rhizobium johnstonii (strain DSM 114642 / LMG 32736 / 3841) (Rhizobium leguminosarum bv. viciae).